Reading from the N-terminus, the 340-residue chain is MQSIPIKNVGADNVSQLIDRFERQYVYLRLSVTDVCNFRCNYCLPDGYKPPSHKQQFLSVSEIQRVVRAFADLGTEKVRITGGEPTLRKDFLEIAHTVSQTNGIKKVALTTNGYRMERDIDLWQQAGITDINVSVDSLDTRQFQLITGENKLQSILKGIDRAFEIGYRKIKVNAVLMKQYTAPELDKFLVWIKDKPIQMRFIELMETGEMDSFFQAQHLSGQSVMQRLLQEGWQLQPKALSDGPAKVLSHPDYQGEIGLIMPYEKNFCASCNRLRVSALGKLHLCLFGEEGIDLRDLLSEDTQQAQLEARLKAALQGKREHHYLHIGDSGIRNNLASIGG.

The region spanning 20 to 246 (RFERQYVYLR…PKALSDGPAK (227 aa)) is the Radical SAM core domain. Arg29 is a binding site for GTP. The [4Fe-4S] cluster site is built by Cys36 and Cys40. An S-adenosyl-L-methionine-binding site is contributed by Tyr42. Residue Cys43 participates in [4Fe-4S] cluster binding. Arg79 provides a ligand contact to GTP. Gly83 serves as a coordination point for S-adenosyl-L-methionine. Thr110 lines the GTP pocket. Ser134 is an S-adenosyl-L-methionine binding site. GTP is bound at residue Lys171. Met205 contributes to the S-adenosyl-L-methionine binding site. [4Fe-4S] cluster is bound by residues Cys268 and Cys271. 273 to 275 (RLR) contributes to the GTP binding site. Residue Cys285 participates in [4Fe-4S] cluster binding.

The protein belongs to the radical SAM superfamily. MoaA family. Monomer and homodimer. Requires [4Fe-4S] cluster as cofactor.

The catalysed reaction is GTP + AH2 + S-adenosyl-L-methionine = (8S)-3',8-cyclo-7,8-dihydroguanosine 5'-triphosphate + 5'-deoxyadenosine + L-methionine + A + H(+). It functions in the pathway cofactor biosynthesis; molybdopterin biosynthesis. In terms of biological role, catalyzes the cyclization of GTP to (8S)-3',8-cyclo-7,8-dihydroguanosine 5'-triphosphate. In Actinobacillus pleuropneumoniae serotype 7 (strain AP76), this protein is GTP 3',8-cyclase.